A 164-amino-acid polypeptide reads, in one-letter code: MKTYRRQLREKIIQALYTLELRDVDTDSATNWLLTKEMADDPNAMKFFNHLMKSIIDHREEIDRHIAKHTFNWDMNRIAIIDKNILRMALAEILYCEDIPPKVSINEAIEIAKKFNSTEKSSKFVNGILDAIFNDLKAEGRIQKCGRGLIDHTESKMQKSESNR.

Belongs to the NusB family.

Its function is as follows. Involved in transcription antitermination. Required for transcription of ribosomal RNA (rRNA) genes. Binds specifically to the boxA antiterminator sequence of the ribosomal RNA (rrn) operons. The chain is Transcription antitermination protein NusB from Chlorobaculum parvum (strain DSM 263 / NCIMB 8327) (Chlorobium vibrioforme subsp. thiosulfatophilum).